The chain runs to 227 residues: UPF0758 protein Pcryo_2119 (227 aa).

In terms of domain architecture, MPN spans 102-224 (GLGRSQMVKD…TLSYAENSLP (123 aa)). Positions 173, 175, and 186 each coordinate Zn(2+). Residues 173–186 (HNHPHTDAKPSTAD) carry the JAMM motif motif.

The protein belongs to the UPF0758 family.

The sequence is that of UPF0758 protein Pcryo_2119 from Psychrobacter cryohalolentis (strain ATCC BAA-1226 / DSM 17306 / VKM B-2378 / K5).